Reading from the N-terminus, the 148-residue chain is Trypsin inhibitor CMe (148 aa).

Positions Met-1–Ser-24 are cleaved as a signal peptide.

This sequence belongs to the protease inhibitor I6 (cereal trypsin/alpha-amylase inhibitor) family. Five disulfide bonds, which are essential for the inhibitor activity, are probably present. Expressed in the developing endosperm. Not detected in embryo, aleurone, coleoptile, roots and leaves.

It is found in the secreted. Functionally, inhibits trypsin in vitro. Probably plays a protective role through inhibition of insect midgut proteases. This chain is Trypsin inhibitor CMe (ITR1), found in Hordeum vulgare (Barley).